We begin with the raw amino-acid sequence, 98 residues long: MAEEEPISVDYEVFGKVQGVFFRKYTQAEGNRLGLVGWVRNTDTGTVTGQLQGPSEKVREMQIWLQKKGSPKSRITKAQFQNERRIKKLEHSTFSICK.

The 91-residue stretch at 8-98 (SVDYEVFGKV…LEHSTFSICK (91 aa)) folds into the Acylphosphatase-like domain. Active-site residues include Arg-23 and Asn-41.

Belongs to the acylphosphatase family.

It catalyses the reaction an acyl phosphate + H2O = a carboxylate + phosphate + H(+). This chain is Acylphosphatase-1 (acyp1), found in Xenopus tropicalis (Western clawed frog).